The chain runs to 258 residues: Peroxisomal membrane protein 11B (258 aa).

K43 is subject to N6-acetyllysine. The interaction with PEX19, PEX11G and FIS1 and peroxisome targeting stretch occupies residues 210–258 (VVRNACDLFIPLDKLGLWRCGPGIVGLCGLVSSILSILTLICPWLRLKP). The chain crosses the membrane as a helical span at residues 232-254 (GIVGLCGLVSSILSILTLICPWL).

Belongs to the peroxin-11 family. As to quaternary structure, homodimer. Heterodimer with PEX11G. Interacts with PEX19. Interacts with FIS1.

The protein localises to the peroxisome membrane. Functionally, involved in peroxisomal proliferation. May regulate peroxisome division by recruiting the dynamin-related GTPase DNM1L to the peroxisomal membrane. Promotes membrane protrusion and elongation on the peroxisomal surface. The protein is Peroxisomal membrane protein 11B (PEX11B) of Bos taurus (Bovine).